The following is a 283-amino-acid chain: Protein/nucleic acid deglycase HchA (283 aa).

3 residues coordinate Zn(2+): His-86, Glu-91, and His-123. Cys-185 (nucleophile) is an active-site residue.

Belongs to the peptidase C56 family. HchA subfamily. As to quaternary structure, homodimer.

The protein resides in the cytoplasm. The catalysed reaction is N(omega)-(1-hydroxy-2-oxopropyl)-L-arginyl-[protein] + H2O = lactate + L-arginyl-[protein] + H(+). The enzyme catalyses N(6)-(1-hydroxy-2-oxopropyl)-L-lysyl-[protein] + H2O = lactate + L-lysyl-[protein] + H(+). It catalyses the reaction S-(1-hydroxy-2-oxopropyl)-L-cysteinyl-[protein] + H2O = lactate + L-cysteinyl-[protein] + H(+). It carries out the reaction N(omega)-(1-hydroxy-2-oxoethyl)-L-arginyl-[protein] + H2O = L-arginyl-[protein] + glycolate + H(+). The catalysed reaction is N(6)-(1-hydroxy-2-oxoethyl)-L-lysyl-[protein] + H2O = glycolate + L-lysyl-[protein] + H(+). The enzyme catalyses S-(1-hydroxy-2-oxoethyl)-L-cysteinyl-[protein] + H2O = glycolate + L-cysteinyl-[protein] + H(+). It catalyses the reaction N(2)-(1-hydroxy-2-oxopropyl)-dGTP + H2O = lactate + dGTP + H(+). It carries out the reaction N(2)-(1-hydroxy-2-oxopropyl)-GTP + H2O = lactate + GTP + H(+). The catalysed reaction is N(2)-(1-hydroxy-2-oxopropyl)-GDP + H2O = lactate + GDP + H(+). The enzyme catalyses N(2)-(1-hydroxy-2-oxopropyl)-GMP + H2O = lactate + GMP + H(+). It catalyses the reaction N(2)-(1-hydroxy-2-oxoethyl)-dGTP + H2O = dGTP + glycolate + H(+). It carries out the reaction N(2)-(1-hydroxy-2-oxoethyl)-GTP + H2O = glycolate + GTP + H(+). The catalysed reaction is N(2)-(1-hydroxy-2-oxoethyl)-GDP + H2O = glycolate + GDP + H(+). The enzyme catalyses N(2)-(1-hydroxy-2-oxoethyl)-GMP + H2O = glycolate + GMP + H(+). It catalyses the reaction an N(2)-(1-hydroxy-2-oxopropyl)-guanosine in RNA + H2O = a guanosine in RNA + lactate + H(+). It carries out the reaction an N(2)-(1-hydroxy-2-oxopropyl)-2'-deoxyguanosine in DNA + H2O = a 2'-deoxyguanosine in DNA + lactate + H(+). The catalysed reaction is an N(2)-(1-hydroxy-2-oxoethyl)-guanosine in RNA + H2O = a guanosine in RNA + glycolate + H(+). The enzyme catalyses an N(2)-(1-hydroxy-2-oxoethyl)-2'-deoxyguanosine in DNA + H2O = a 2'-deoxyguanosine in DNA + glycolate + H(+). Protein and nucleotide deglycase that catalyzes the deglycation of the Maillard adducts formed between amino groups of proteins or nucleotides and reactive carbonyl groups of glyoxals. Thus, functions as a protein deglycase that repairs methylglyoxal- and glyoxal-glycated proteins, and releases repaired proteins and lactate or glycolate, respectively. Deglycates cysteine, arginine and lysine residues in proteins, and thus reactivates these proteins by reversing glycation by glyoxals. Acts on early glycation intermediates (hemithioacetals and aminocarbinols), preventing the formation of Schiff bases and advanced glycation endproducts (AGE). Also functions as a nucleotide deglycase able to repair glycated guanine in the free nucleotide pool (GTP, GDP, GMP, dGTP) and in DNA and RNA. Is thus involved in a major nucleotide repair system named guanine glycation repair (GG repair), dedicated to reversing methylglyoxal and glyoxal damage via nucleotide sanitization and direct nucleic acid repair. Plays an important role in protecting cells from carbonyl stress. The protein is Protein/nucleic acid deglycase HchA of Escherichia coli O157:H7.